Reading from the N-terminus, the 309-residue chain is ATP synthase gamma chain (309 aa).

The protein belongs to the ATPase gamma chain family. As to quaternary structure, F-type ATPases have 2 components, CF(1) - the catalytic core - and CF(0) - the membrane proton channel. CF(1) has five subunits: alpha(3), beta(3), gamma(1), delta(1), epsilon(1). CF(0) has three main subunits: a, b and c.

It localises to the cell membrane. In terms of biological role, produces ATP from ADP in the presence of a proton gradient across the membrane. The gamma chain is believed to be important in regulating ATPase activity and the flow of protons through the CF(0) complex. In Mycobacterium sp. (strain JLS), this protein is ATP synthase gamma chain.